The primary structure comprises 141 residues: Large ribosomal subunit protein uL11 (141 aa).

This sequence belongs to the universal ribosomal protein uL11 family. Part of the ribosomal stalk of the 50S ribosomal subunit. Interacts with L10 and the large rRNA to form the base of the stalk. L10 forms an elongated spine to which L12 dimers bind in a sequential fashion forming a multimeric L10(L12)X complex. In terms of processing, one or more lysine residues are methylated.

Functionally, forms part of the ribosomal stalk which helps the ribosome interact with GTP-bound translation factors. The chain is Large ribosomal subunit protein uL11 from Maridesulfovibrio salexigens (strain ATCC 14822 / DSM 2638 / NCIMB 8403 / VKM B-1763) (Desulfovibrio salexigens).